The chain runs to 150 residues: Globin-2 A chain (150 aa).

The residue at position 2 (Val2) is a Blocked amino end (Val). In terms of domain architecture, Globin spans Cys10–Leu150. His102 lines the heme b pocket.

This sequence belongs to the globin family. Heterotetramer of two alpha chains and two beta chains.

The polypeptide is Globin-2 A chain (Anadara inaequivalvis (Inequivalve ark)).